A 294-amino-acid polypeptide reads, in one-letter code: uncharacterized protein (294 aa).

Disordered stretches follow at residues 25 to 59 (VQVY…RVRR) and 77 to 141 (LKDD…FEAP). Residues 86–139 (YEELEDDDDDESIEEESDSEFEGESSSDEEESSYDSDSDYDSETEPEDSDDDFE) are compositionally biased toward acidic residues. The stretch at 201-234 (IKFYKRNTTFTEEELAEIEEDLLAEVKARYNNMK) forms a coiled coil. The segment covering 242 to 259 (TIETTEDDKKAGEVNKYD) has biased composition (basic and acidic residues). The segment at 242 to 294 (TIETTEDDKKAGEVNKYDIDDDFIEKTESDEEEEITEDDSSEQETVVVEPVDE) is disordered. Residues 260 to 283 (IDDDFIEKTESDEEEEITEDDSSE) show a composition bias toward acidic residues.

This is an uncharacterized protein from Magallana gigas (Pacific oyster).